The chain runs to 146 residues: UPF0310 protein YdcG (146 aa).

The protein belongs to the UPF0310 family.

This Bacillus subtilis (strain 168) protein is UPF0310 protein YdcG (ydcG).